An 861-amino-acid chain; its full sequence is Leucine--tRNA ligase (861 aa).

The 'HIGH' region motif lies at 42–52; sequence PYPSGRLHMGH. The 'KMSKS' region signature appears at 619–623; sequence KMSKS. Position 622 (K622) interacts with ATP.

Belongs to the class-I aminoacyl-tRNA synthetase family.

It localises to the cytoplasm. It carries out the reaction tRNA(Leu) + L-leucine + ATP = L-leucyl-tRNA(Leu) + AMP + diphosphate. This Haemophilus ducreyi (strain 35000HP / ATCC 700724) protein is Leucine--tRNA ligase.